The chain runs to 303 residues: UDP-N-acetylenolpyruvoylglucosamine reductase (303 aa).

Residues 23–188 (KVGGPADYLV…ISAKFALKPG (166 aa)) enclose the FAD-binding PCMH-type domain. Arg167 is an active-site residue. Catalysis depends on Ser217, which acts as the Proton donor. Residue Glu287 is part of the active site.

It belongs to the MurB family. FAD serves as cofactor.

The protein localises to the cytoplasm. The enzyme catalyses UDP-N-acetyl-alpha-D-muramate + NADP(+) = UDP-N-acetyl-3-O-(1-carboxyvinyl)-alpha-D-glucosamine + NADPH + H(+). It participates in cell wall biogenesis; peptidoglycan biosynthesis. In terms of biological role, cell wall formation. This Streptococcus uberis (strain ATCC BAA-854 / 0140J) protein is UDP-N-acetylenolpyruvoylglucosamine reductase.